We begin with the raw amino-acid sequence, 381 residues long: Spermidine/putrescine import ATP-binding protein PotA (381 aa).

The ABC transporter domain maps to 19 to 249; it reads VELRKVFKVF…PESPFVADFI (231 aa). 51 to 58 is an ATP binding site; it reads GPSGCGKT.

Belongs to the ABC transporter superfamily. Spermidine/putrescine importer (TC 3.A.1.11.1) family. As to quaternary structure, the complex is composed of two ATP-binding proteins (PotA), two transmembrane proteins (PotB and PotC) and a solute-binding protein (PotD).

The protein resides in the cell inner membrane. The enzyme catalyses ATP + H2O + polyamine-[polyamine-binding protein]Side 1 = ADP + phosphate + polyamineSide 2 + [polyamine-binding protein]Side 1.. Functionally, part of the ABC transporter complex PotABCD involved in spermidine/putrescine import. Responsible for energy coupling to the transport system. The polypeptide is Spermidine/putrescine import ATP-binding protein PotA (Trichodesmium erythraeum (strain IMS101)).